The following is a 343-amino-acid chain: MWPNGSSLGPCFRPTNITLEERRLIASPWFAASFCVVGLASNLLALSVLAGARQGGSHTRSSFLTFLCGLVLTDFLGLLVTGAIVVSQHAALFEWHAVDPGCRLCRFMGVVMIFFGLSPLLLGATMASERFLGITRPFSRPVVTSQRRAWATVGLVWAAALALGLLPLLGLGRYTVQYPGSWCFLTLGAESGDVAFGLLFSMLGGLSVGLSFLLNTVSVATLCHVYHGQEAAQQRPRDSEVEMMAQLLGIMLVASVCWLPLLVFIAQTVLRNPPAMSPSGQLSRATEQELLIYLRVATWNQILDPWVYILFRRAVLRRLQPRLSTRPRSLSLQPQLTQRSGLQ.

The Extracellular portion of the chain corresponds to M1–W29. N4 and N16 each carry an N-linked (GlcNAc...) asparagine glycan. The chain crosses the membrane as a helical span at residues F30 to A52. At R53–F66 the chain is on the cytoplasmic side. A helical membrane pass occupies residues L67 to S87. Topologically, residues Q88 to R106 are extracellular. C105 and C183 form a disulfide bridge. Residues F107–S128 form a helical membrane-spanning segment. At E129–A149 the chain is on the cytoplasmic side. Residues W150–G172 traverse the membrane as a helical segment. Topologically, residues R173–D193 are extracellular. Residues V194–V219 form a helical membrane-spanning segment. Topologically, residues A220 to Q246 are cytoplasmic. A helical transmembrane segment spans residues L247–L270. Residues R271–E289 are Extracellular-facing. The helical transmembrane segment at L290–F311 threads the bilayer. Topologically, residues R312–Q343 are cytoplasmic. S329 and S331 each carry phosphoserine.

It belongs to the G-protein coupled receptor 1 family. As to quaternary structure, interacts with RPGRIP1L. Interacts with RACK1; the interaction regulates TBXA2R cell surface expression.

It localises to the cell membrane. Receptor for thromboxane A2 (TXA2), a potent stimulator of platelet aggregation. The activity of this receptor is mediated by a G-protein that activates a phosphatidylinositol-calcium second messenger system. In the kidney, the binding of TXA2 to glomerular TP receptors causes intense vasoconstriction. Activates phospholipase C and adenylyl cyclase. This Chlorocebus aethiops (Green monkey) protein is Thromboxane A2 receptor (TBXA2R).